We begin with the raw amino-acid sequence, 127 residues long: Holo-[acyl-carrier-protein] synthase (127 aa).

2 residues coordinate Mg(2+): aspartate 7 and glutamate 53.

Belongs to the P-Pant transferase superfamily. AcpS family. The cofactor is Mg(2+).

The protein localises to the cytoplasm. The catalysed reaction is apo-[ACP] + CoA = holo-[ACP] + adenosine 3',5'-bisphosphate + H(+). Its function is as follows. Transfers the 4'-phosphopantetheine moiety from coenzyme A to a Ser of acyl-carrier-protein. The polypeptide is Holo-[acyl-carrier-protein] synthase (Herpetosiphon aurantiacus (strain ATCC 23779 / DSM 785 / 114-95)).